Consider the following 1033-residue polypeptide: NACHT, LRR and PYD domains-containing protein 3 (1033 aa).

One can recognise a Pyrin domain in the interval 1-91 (MTSVRCKLAQ…WEKAKKDQPE (91 aa)). Residue S3 is modified to Phosphoserine. C6 and C104 are disulfide-bonded. The residue at position 11 (Y11) is a Phosphotyrosine. C126 carries S-palmitoyl cysteine lipidation. The segment at 127 to 130 (KKKK) is required for binding to phosphatidylinositol 4-phosphate (PtdIns4P). 3 positions are modified to phosphotyrosine; by BTK: Y132, Y136, and Y145. The FISNA domain occupies 136 to 206 (YRRHVRSRFY…SSLKLELLFE (71 aa)). S157 carries the post-translational modification Phosphoserine. The residue at position 164 (Y164) is a Phosphotyrosine; by BTK. Position 165 (T165) interacts with ATP. S194 carries the post-translational modification Phosphoserine; by MAPK8. Phosphoserine is present on S197. Residues 216–532 (HTVVFQGAAG…EFFAAMYYLL (317 aa)) form the NACHT domain. 222–230 (GAAGIGKTI) is a binding site for ATP. Residue S261 is modified to Phosphoserine. S291 is modified (phosphoserine; by PKD/PRKD1). K320 is covalently cross-linked (Glycyl lysine isopeptide (Lys-Gly) (interchain with G-Cter in ubiquitin)). At S330 the chain carries Phosphoserine. A KFERQ-like motif 1 motif is present at residues 351–355 (LEKLQ). K426 is covalently cross-linked (Glycyl lysine isopeptide (Lys-Gly) (interchain with G-Cter in ubiquitin)). H518 provides a ligand contact to ATP. The KFERQ-like motif 2 signature appears at 601–605 (QVRLE). A Glycyl lysine isopeptide (Lys-Gly) (interchain with G-Cter in ubiquitin) cross-link involves residue K687. Phosphoserine is present on residues S725 and S732. 5 LRR repeats span residues 739–759 (SLTE…RVLC), 768–789 (NIQR…DISS), 796–816 (KLVE…RLLC), 825–846 (NLQK…DLAL), and 853–873 (SLTR…QVLC). The short motif at 795-799 (QKLVE) is the KFERQ-like motif 3 element. S803 is subject to Phosphoserine; by CSNK1A1. 3 S-palmitoyl cysteine lipidation sites follow: C834, C835, and C841. The residue at position 858 (Y858) is a Phosphotyrosine. A Glycyl lysine isopeptide (Lys-Gly) (interchain with G-Cter in ubiquitin) cross-link involves residue K875. LRR repeat units follow at residues 882 to 903 (NLQK…ALTS), 910 to 930 (NFTH…RLLC), 939 to 960 (KLQM…NLST), and 967 to 988 (SLRK…TLCE). C955 is lipidated: S-palmitoyl cysteine. K970 participates in a covalent cross-link: Glycyl lysine isopeptide (Lys-Gly) (interchain with G-Cter in ubiquitin). A KFERQ-like motif 4 motif is present at residues 988–992 (EVLKQ). Position 1032 is a phosphoserine (S1032).

This sequence belongs to the NLRP family. Sensor component of NLRP3 inflammasomes; inflammasomes are supramolecular complexes that assemble in the cytosol in response to pathogens and other damage-associated signals and play critical roles in innate immunity and inflammation. The core of NLRP3 inflammasomes consists of a signal sensor component (NLRP3), an adapter (PYCARD/ASC), which recruits an effector pro-inflammatory caspase (CASP1 and, possibly, CASP4 and CASP5). Homodecamer; inactive NLRP3 forms homodecameric double-ring cages that hide pyrin domains within NACHT-LRR rings to avoid premature activation. Interacts (via pyrin domain) with PYCARD/ASC (via pyrin domain); interaction is direct. Interacts (via LRR repeat domain) with NEK7 (via N-terminus); the interaction is required for the formation of the complex NLRP3:PYCARD, oligomerization of PYCARD/ASC and activation of CASP1. Interacts (via LRR repeat domain) with NR4A1/Nur77 (via N-terminus); the interaction is direct, requires activation of NR4A1 by its ligands NBRE-containing dsDNA and lipopolysaccharide, and stimulates the association of NLRP3 with NEK7 for non-canonical NLRP3 inflammasome activation. Interacts with CARD8; leading to inhibit formation of the NLRP3 inflammasome. Interacts with MEFV; this interaction targets NLRP3 to degradation by autophagy, hence preventing excessive IL1B- and IL18-mediated inflammation. Interacts with EIF2AK2/PKR; this interaction requires EIF2AK2 activity, is accompanied by EIF2AK2 autophosphorylation and promotes inflammasome assembly in response to specific stimuli. Interacts with GBP5 (via DAPIN domain); this interaction promotes inflammasome assembly in response to microbial and soluble, but not crystalline, agents. Interacts with PML (isoform PML-1) (via the leucine-rich repeat (LRR) domain); PML-mediated increase in NLRP3 inflammasome activation does not depend upon this interaction. Interacts (via NACHT domain) with DHX33 (via DEAH box); NLRP3 activation in presence of cytosolic dsRNA is mediated by DHX33. Interacts (via NACHT and LRR domains) with ARRB2; this interaction is direct and inducible by polyunsaturated fatty acids (PUFAs). Interacts (via NACHT domain) with DDX3X under both LPS-primed and inflammasome-activating conditions. Interacts with IRF4 (via the LRR domain); this interaction is direct and is required for optimal IRF4 binding to IL4 promoter and efficient IL4 transactivation during differentiation of Th2 helper T-cells. Interacts with MAVS; promoting localization to mitochondria and activation of the NLRP3 inflammasome. Interacts with MARK4; promoting localization of NLRP3 to the microtubule organizing center (MTOC). Interacts with TRIM50; this interaction also promotes NLRP3 oligomerization and subsequent inflammasome activation. Interacts with IRGM; preventing NLRP3 inflammasome assembly and promoting NLRP3 degradation. Interacts (via KFERQ-like motifs) with HSPA8/HSC70; promoting NLRP3 degradation by the chaperone-mediated autophagy pathway. Interacts (via NACHT and LLR domains) with ABHD8; this interaction is enhanced in the presence of NLRP3 inflammasome inducers, such as ATP, nigericin, silica, or alum. Interaction with ABHD8 leads the recruitment of ZDHHC12, hence facilitating NLRP3 palmitoylation and degradation by the chaperone-mediated autophagy pathway (CMA), therefore attenuating NLRP3 inflammasome activation. Post-translationally, phosphorylation at Ser-194 by MAPK8/JNK1 increases inflammasome activation by promoting deubiquitination by BRCC3 and NLRP3 homooligomerization. Phosphorylation at Ser-803 by CSNK1A1 prevents inflammasome activation by preventing NEK7 recruitment. Phosphorylation at Ser-3 in the pyrin domain inhibits homomultimerization of NLRP3 and activation of the NLRP3 inflammasome: dephosphorylation by protein phosphatase 2A (PP2A) promotes assembly of the NLRP3 inflammasome. Phosphorylation at Ser-291 by PKD/PRKD1 promotes NLRP3 inflammasome assembly. Phosphorylation by ERK1/MAPK3 promotes NLRP3 inflammasome assembly. Phosphorylation by BTK (at Tyr-132, Tyr-136, Tyr-145 and Tyr-164) in the region that mediates binding to phosphatidylinositol phosphate, promotes relocalization of NLRP3 and assembly of the NLRP3 inflammasome. Phosphorylation at Tyr-858 inhibits NLRP3 inflammasome assembly: dephosphorylation by PTPN22 promotes inflammasome activation Phosphorylated by LATS1 and LATS2 at Ser-261 following palmitoylation by ZDHHC1, promoting its relocalization to the microtubule organizing center (MTOC), where NLRP3 is activated by NEK7, leading to inflammasome assembly and activation. Ubiquitinated; undergoes both 'Lys-48'- and 'Lys-63'-linked polyubiquitination. Ubiquitination does not lead to degradation, but inhibits inflammasome activation. Deubiquitination is catalyzed by BRCC3 and associated with NLRP3 activation and inflammasome assembly. This process can be induced by the activation of Toll-like receptors (by LPS), through a non-transcriptional pathway dependent on the mitochondrial production of reactive oxygen species, and by ATP. Ubiquitinated by TRIM31 via 'Lys-48'-linked ubiquitination, leading to its degradation by the proteasome. Ubiquitinated at Lys-687 by the SCF(FBXL2) complex, leading to its degradation by the proteasome. Ubiquitinated by TRIM35 via 'lys-48' and 'Lys-63'-linked ubiquitination leading to inhibition of NLRP3 inflammasome activation. Undergoes 'Lys-27'-linked polyubiquitination by MARCHF5, leading to NLRP3-NEK7 complex formation and NLRP3 oligomerization. In terms of processing, the disulfide bond in the pyrin domain might play a role in reactive oxygen species-mediated activation. Post-translationally, palmitoylation by ZDHHC12 promotes NLRP3 degradation by the chaperone-mediated autophagy pathway (CMA) and therefore limits NLRP3 inflammasome activation. Interaction with ZDHHC12, and hence NLRP3 palmitoylation, is enhanced by ABHD8. Following palmitoylation, HSPA8/HSC70 recognizes and binds the KFERQ-like motifs on NLRP3 and promotes NLRP3 recruitment to lysosomes, where it is degraded via the chaperone-mediated autophagy pathway in a LAMP2-dependent process. Palmitoylation at Cys-834 and Cys-835 by ZDHHC5 enhances its binding to NEK7 leading to inflammasome assembly and activation. Palmitoylation at Cys-126 and Cys-955 by ZDHHC1 facilitates phosphorylation at Ser-261 by LATS1 and LATS2, promoting its relocalization to the microtubule organizing center (MTOC), where NLRP3 is activated by NEK7, leading to inflammasome assembly and activation. Depalmitoylated by ABHD17A. Degraded via selective autophagy following interaction with Irgm1. Irgm1 promotes NLRP3 recruitment to autophagosome membranes, promoting its SQSTM1/p62-dependent autophagy-dependent degradation. In terms of tissue distribution, expressed with high levels in peripheral blood leukocytes, including Th2 lymphocytes and macrophages. Expressed at low levels in resting osteoblasts (at protein level).

The protein localises to the cytoplasm. It is found in the cytosol. The protein resides in the inflammasome. It localises to the cytoskeleton. Its subcellular location is the microtubule organizing center. The protein localises to the golgi apparatus membrane. It is found in the endoplasmic reticulum. The protein resides in the mitochondrion. It localises to the secreted. Its subcellular location is the nucleus. It carries out the reaction ATP + H2O = ADP + phosphate + H(+). Its activity is regulated as follows. Under resting conditions, NLRP3 binds ADP and is autoinhibited. Inactive NLRP3 forms homodecameric double-ring cages that hide pyrin domains within NACHT-LRR rings to avoid premature activation. NLRP3 activation stimuli include extracellular ATP, nigericin, reactive oxygen species, crystals of monosodium urate or cholesterol, amyloid-beta fibers, environmental or industrial particles and nanoparticles, such as asbestos, silica, aluminum salts, cytosolic dsRNA, etc. Almost all stimuli trigger intracellular K(+) efflux. These stimuli lead to membrane perturbations that induce activation of NLRP3. Upon activation, NLRP3 is transported to microtubule organizing center (MTOC), where it is unlocked by NEK7, leading to its relocalization to dispersed trans-Golgi network (dTGN) vesicle membranes and recruitment of PYCARD/ASC for the formation of an active inflammasome complex. NEK7-activated NLRP3 forms a disk-shaped inflammasome. NLRP3 and PYCARD/ASC interact via their respective pyrin domains; interaction initiates speck formation (nucleation) which greatly enhances further addition of soluble PYCARD/ASC molecules to the speck in a prion-like polymerization process. Clustered PYCARD/ASC nucleates the formation of CASP1 filaments through the interaction of their respective CARD domains, acting as a platform for CASP1 polymerization and activation. Active CASP1 then processes IL1B and IL18 precursors, leading to the release of mature cytokines in the extracellular milieu and inflammatory response. NLRP3 inflammasome assembly is inhibited by IRGM, which impedes NLRP3 oligomerization. NLRP3 inflammasome is inhibited by cyclic AMP (cAMP), which directly binds NLRP3; inhibition is relieved by calcium-sensing receptor CASR, which inhibits production of cAMP. Specifically inhibited by sulfonylurea MCC950 (also named CP-456,773, CRID3), a potent and specific small-molecule inhibitor of the NLRP3 inflammasome that acts by preventing ATP hydrolysis. Its function is as follows. Sensor component of the NLRP3 inflammasome, which mediates inflammasome activation in response to defects in membrane integrity, leading to secretion of inflammatory cytokines IL1B and IL18 and pyroptosis. In response to pathogens and other damage-associated signals that affect the integrity of membranes, initiates the formation of the inflammasome polymeric complex composed of NLRP3, CASP1 and PYCARD/ASC. Recruitment of pro-caspase-1 (proCASP1) to the NLRP3 inflammasome promotes caspase-1 (CASP1) activation, which subsequently cleaves and activates inflammatory cytokines IL1B and IL18 and gasdermin-D (GSDMD), promoting cytokine secretion and pyroptosis. Activation of NLRP3 inflammasome is also required for HMGB1 secretion; stimulating inflammatory responses. Under resting conditions, ADP-bound NLRP3 is autoinhibited. NLRP3 activation stimuli include extracellular ATP, nigericin, reactive oxygen species, crystals of monosodium urate or cholesterol, amyloid-beta fibers, environmental or industrial particles and nanoparticles, such as asbestos, silica, aluminum salts, cytosolic dsRNA, etc. Almost all stimuli trigger intracellular K(+) efflux. These stimuli lead to membrane perturbation and activation of NLRP3. Upon activation, NLRP3 is transported to microtubule organizing center (MTOC), where it is unlocked by NEK7, leading to its relocalization to dispersed trans-Golgi network (dTGN) vesicle membranes and formation of an active inflammasome complex. Associates with dTGN vesicle membranes by binding to phosphatidylinositol 4-phosphate (PtdIns4P). Shows ATPase activity. In terms of biological role, independently of inflammasome activation, regulates the differentiation of T helper 2 (Th2) cells and has a role in Th2 cell-dependent asthma and tumor growth. During Th2 differentiation, required for optimal IRF4 binding to IL4 promoter and for IRF4-dependent IL4 transcription. Binds to the consensus DNA sequence 5'-GRRGGNRGAG-3'. May also participate in the transcription of IL5, IL13, GATA3, CCR3, CCR4 and MAF. This is NACHT, LRR and PYD domains-containing protein 3 from Mus musculus (Mouse).